Reading from the N-terminus, the 166-residue chain is Ubiquitin-conjugating enzyme E2 7 (166 aa).

A2 bears the N-acetylalanine mark. Positions 4-164 (QASLLLQKQL…VSRCVRKSQE (161 aa)) constitute a UBC core domain. The Glycyl thioester intermediate role is filled by C89.

Belongs to the ubiquitin-conjugating enzyme family.

The catalysed reaction is S-ubiquitinyl-[E1 ubiquitin-activating enzyme]-L-cysteine + [E2 ubiquitin-conjugating enzyme]-L-cysteine = [E1 ubiquitin-activating enzyme]-L-cysteine + S-ubiquitinyl-[E2 ubiquitin-conjugating enzyme]-L-cysteine.. Its pathway is protein modification; protein ubiquitination. Functionally, accepts the ubiquitin from the E1 complex and catalyzes its covalent attachment to other proteins. Involved in the formation of multiubiquitin chains. Signal the protein for selective degradation. This chain is Ubiquitin-conjugating enzyme E2 7 (UBC7), found in Arabidopsis thaliana (Mouse-ear cress).